Here is a 534-residue protein sequence, read N- to C-terminus: Lysophosphatidylcholine acyltransferase 1 (534 aa).

Residues 1–22 are disordered; the sequence is MRLRGCGPRAAPASSAGASDAR. Residues 1-57 lie on the Cytoplasmic side of the membrane; that stretch reads MRLRGCGPRAAPASSAGASDARLLAPPGRNPFVHELRLSALQKAQVALMTLTLFPVR. The span at 7 to 22 shows a compositional bias: low complexity; the sequence is GPRAAPASSAGASDAR. A helical; Signal-anchor for type II membrane protein transmembrane segment spans residues 58 to 78; sequence LLVAAAMMLLAWPLALVASLG. Over 79–534 the chain is Lumenal; the sequence is SAEKEPEQPP…GRKPVRKKLD (456 aa). The short motif at 135–140 is the HXXXXD motif element; the sequence is HSSYFD. 2 consecutive EF-hand domains span residues 379–414 and 451–486; these read PVSDLLEDMFSLFDESGSGEVDLRECVVALSVVCRP and VAELTVTDLFRAIDQEEKGKITFADFHRFAEMYPAF. The Ca(2+) site is built by D392, S394, S396, E398, and E403. The disordered stretch occupies residues 512–534; sequence GFCADFSPENSDAGRKPVRKKLD. Basic and acidic residues predominate over residues 523-534; it reads DAGRKPVRKKLD. Residues 531-534 carry the Di-lysine motif motif; the sequence is KKLD.

It belongs to the 1-acyl-sn-glycerol-3-phosphate acyltransferase family. In terms of tissue distribution, erythrocytes.

It localises to the endoplasmic reticulum membrane. It is found in the golgi apparatus membrane. The protein localises to the cell membrane. Its subcellular location is the lipid droplet. The catalysed reaction is a 1-acyl-sn-glycero-3-phosphocholine + an acyl-CoA = a 1,2-diacyl-sn-glycero-3-phosphocholine + CoA. It catalyses the reaction a 1-acyl-sn-glycero-3-phosphate + an acyl-CoA = a 1,2-diacyl-sn-glycero-3-phosphate + CoA. It carries out the reaction a 1-O-alkyl-sn-glycero-3-phosphocholine + acetyl-CoA = a 1-O-alkyl-2-acetyl-sn-glycero-3-phosphocholine + CoA. The enzyme catalyses a 1-O-(1Z-alkenyl)-sn-glycero-3-phosphocholine + an acyl-CoA = a 1-O-(1Z-alkenyl)-2-acyl-sn-glycero-3-phosphocholine + CoA. The catalysed reaction is 1-acyl-sn-glycero-3-phospho-(1'-sn-glycerol) + an acyl-CoA = a 1,2-diacyl-sn-glycero-3-phospho-(1'-sn-glycerol) + CoA. It catalyses the reaction 1-hexadecanoyl-sn-glycero-3-phosphocholine + (9Z)-octadecenoyl-CoA = 1-hexadecanoyl-2-(9Z-octadecenoyl)-sn-glycero-3-phosphocholine + CoA. It carries out the reaction 1-hexadecanoyl-sn-glycero-3-phosphocholine + hexadecanoyl-CoA = 1,2-dihexadecanoyl-sn-glycero-3-phosphocholine + CoA. The enzyme catalyses 1-O-hexadecyl-sn-glycero-3-phosphocholine + hexadecanoyl-CoA = 1-O-hexadecyl-2-hexadecanoyl-sn-glycero-3-phosphocholine + CoA. The catalysed reaction is a 1-O-(1Z-alkenyl)-sn-glycero-3-phosphocholine + hexadecanoyl-CoA = 1-O-(1Z)-alkenyl-2-hexadecanoyl-sn-glycero-3-phosphocholine + CoA. It catalyses the reaction 1-hexadecanoyl-sn-glycero-3-phospho-(1'-sn-glycerol) + hexadecanoyl-CoA = 1,2-dihexadecanoyl-sn-glycero-3-phospho-(1'-sn-glycerol) + CoA. It carries out the reaction 1-dodecanoyl-sn-glycero-3-phosphocholine + hexadecanoyl-CoA = 1-dodecanoyl-2-hexadecanoyl-sn-glycero-3-phosphocholine + CoA. The enzyme catalyses 1-tetradecanoyl-sn-glycero-3-phosphocholine + hexadecanoyl-CoA = 1-tetradecanoyl-2-hexadecanoyl-sn-glycero-3-phosphocholine + CoA. The catalysed reaction is 1-O-octadecyl-sn-glycero-3-phosphocholine + hexadecanoyl-CoA = 1-O-octadecyl-2-hexadecanoyl-sn-glycero-3-phosphocholine + CoA. It catalyses the reaction 1-octadecanoyl-sn-glycero-3-phosphocholine + hexadecanoyl-CoA = 1-octadecanoyl-2-hexadecanoyl-sn-glycero-3-phosphocholine + CoA. It carries out the reaction 1-(9Z-octadecenoyl)-sn-glycero-3-phosphocholine + hexadecanoyl-CoA = 1-(9Z-octadecenoyl)-2-hexadecanoyl-sn-glycero-3-phosphocholine + CoA. The enzyme catalyses 1-eicosanoyl-sn-glycero-3-phosphocholine + hexadecanoyl-CoA = 1-eicosanoyl-2-hexadecanoyl-sn-glycero-3-phosphocholine + CoA. The catalysed reaction is hexanoyl-CoA + 1-hexadecanoyl-sn-glycero-3-phosphocholine = 1-hexadecanoyl-2-hexanoyl-sn-glycero-3-phosphocholine + CoA. It catalyses the reaction octanoyl-CoA + 1-hexadecanoyl-sn-glycero-3-phosphocholine = 1-hexadecanoyl-2-octanoyl-sn-glycero-3-phosphocholine + CoA. It carries out the reaction decanoyl-CoA + 1-hexadecanoyl-sn-glycero-3-phosphocholine = 1-hexadecanoyl-2-decanoyl-sn-glycero-3-phosphocholine + CoA. The enzyme catalyses dodecanoyl-CoA + 1-hexadecanoyl-sn-glycero-3-phosphocholine = 1-hexadecanoyl-2-dodecanoyl-sn-glycero-3-phosphocholine + CoA. The catalysed reaction is tetradecanoyl-CoA + 1-hexadecanoyl-sn-glycero-3-phosphocholine = 1-hexadecanoyl-2-tetradecanoyl-sn-glycero-3-phosphocholine + CoA. It catalyses the reaction (9Z,12Z)-octadecadienoyl-CoA + 1-hexadecanoyl-sn-glycero-3-phosphocholine = 1-hexadecanoyl-2-(9Z,12Z-octadecadienoyl)-sn-glycero-3-phosphocholine + CoA. It carries out the reaction (4Z,7Z,10Z,13Z,16Z,19Z)-docosahexaenoyl-CoA + 1-hexadecanoyl-sn-glycero-3-phosphocholine = 1-hexadecanoyl-2-(4Z,7Z,10Z,13Z,16Z,19Z-docosahexaenoyl)-sn-glycero-3-phosphocholine + CoA. The enzyme catalyses 1-hexadecanoyl-sn-glycero-3-phosphocholine + acetyl-CoA = 1-hexadecanoyl-2-acetyl-sn-glycero-3-phosphocholine + CoA. The catalysed reaction is eicosanoyl-CoA + 1-hexadecanoyl-sn-glycero-3-phosphocholine = 1-hexadecanoyl-2-eicosanoyl-sn-glycero-3-phosphocholine + CoA. It catalyses the reaction 1-O-hexadecyl-sn-glycero-3-phosphocholine + acetyl-CoA = 1-O-hexadecyl-2-acetyl-sn-glycero-3-phosphocholine + CoA. It carries out the reaction a 1-acyl-sn-glycero-3-phosphocholine + hexadecanoyl-CoA = 1-acyl-2-hexadecanoyl-sn-glycero-3-phosphocholine + CoA. The enzyme catalyses a 1-acyl-sn-glycero-3-phosphate + hexadecanoyl-CoA = 1-acyl-2-hexadecanoyl-sn-glycero-3-phosphate + CoA. The catalysed reaction is 1-acyl-sn-glycero-3-phospho-(1'-sn-glycerol) + hexadecanoyl-CoA = 1-acyl-2-hexadecanoyl-sn-glycero-3-phospho-(1'-sn-glycerol) + CoA. Its pathway is lipid metabolism; phospholipid metabolism. In terms of biological role, exhibits acyltransferase activity. Exhibits acetyltransferase activity. Activity is calcium-independent. Catalyzes the conversion of lysophosphatidylcholine (1-acyl-sn-glycero-3-phosphocholine or LPC) into phosphatidylcholine (1,2-diacyl-sn-glycero-3-phosphocholine or PC). Catalyzes the conversion 1-acyl-sn-glycerol-3-phosphate (lysophosphatidic acid or LPA) into 1,2-diacyl-sn-glycerol-3-phosphate (phosphatidic acid or PA) by incorporating an acyl moiety at the sn-2 position of the glycerol backbone. Displays a clear preference for saturated fatty acyl-CoAs, and 1-myristoyl or 1-palmitoyl LPC as acyl donors and acceptors, respectively. Involved in platelet-activating factor (PAF) biosynthesis by catalyzing the conversion of the PAF precursor, 1-O-alkyl-sn-glycero-3-phosphocholine (lyso-PAF) into 1-O-alkyl-2-acetyl-sn-glycero-3-phosphocholine (PAF). May synthesize phosphatidylcholine in pulmonary surfactant, thereby playing a pivotal role in respiratory physiology. Involved in the regulation of lipid droplet number and size. In Homo sapiens (Human), this protein is Lysophosphatidylcholine acyltransferase 1 (LPCAT1).